A 251-amino-acid polypeptide reads, in one-letter code: 14-3-3-like protein (251 aa).

This sequence belongs to the 14-3-3 family. In terms of tissue distribution, most abundant in roots and flowers.

The protein is 14-3-3-like protein of Nicotiana tabacum (Common tobacco).